The sequence spans 1969 residues: Myosin-3 (1969 aa).

Residues 33–82 (DSKKNCWIPDPEDGFVAAEIQSTTGEQVTVVTVKGNQITVKKDQCQEMNP) enclose the Myosin N-terminal SH3-like domain. A Myosin motor domain is found at 86–791 (DKTEDMANLT…VLAKLEDLRD (706 aa)). Lys130 carries the N6,N6,N6-trimethyllysine modification. 179 to 186 (GESGAGKT) contacts ATP. Actin-binding stretches follow at residues 667–689 (LNNLMNMLYQTHPHFIRCIIPNE) and 770–784 (KVGETKIFFKAGVLA). The IQ domain occupies 794–823 (LSRIVTMFQSRIRSYLAKAEVRRRYEQQTG). The stretch at 857-1969 (KEQEAMGELA…IRSSSNARFL (1113 aa)) forms a coiled coil. Disordered regions lie at residues 942-966 (MQERNEDLARQKKKTDQELSDTKKH), 1006-1029 (NKEKKHQEESNRKLNEDLQSEEDK), 1131-1213 (LEEE…GDSV), and 1234-1255 (KSKLQRDLEESQHATDSEVRSR). 2 stretches are compositionally biased toward basic and acidic residues: residues 1137–1164 (AERNSRQKSDRSRSEAERELEELTERLE) and 1176–1197 (ANKKREAEIAKLRREKEEDSLN).

Belongs to the TRAFAC class myosin-kinesin ATPase superfamily. Myosin family. In terms of assembly, muscle myosin is a hexameric protein that consists of 2 heavy chain subunits (MHC), 2 alkali light chain subunits (MLC) and 2 regulatory light chain subunits (MLC-2). In terms of tissue distribution, expressed in body wall muscles, neighboring vulval muscle cells and the contractile sheath covering the hermaphrodite gonad (myoepithelial sheath cells).

It is found in the cytoplasm. The protein localises to the myofibril. It localises to the sarcomere. The protein resides in the a band. Functionally, essential for muscle contraction. Involved in ovulation likely by regulating the contraction of gonadal myoepithelial sheath cells. This is Myosin-3 (myo-3) from Caenorhabditis elegans.